Reading from the N-terminus, the 381-residue chain is Acetylornithine deacetylase (381 aa).

His-79 provides a ligand contact to Zn(2+). Residue Asp-81 is part of the active site. Asp-111 is a binding site for Zn(2+). Residue Glu-143 is part of the active site. Positions 144, 168, and 354 each coordinate Zn(2+).

It belongs to the peptidase M20A family. ArgE subfamily. As to quaternary structure, homodimer. The cofactor is Zn(2+). Requires Co(2+) as cofactor. Glutathione is required as a cofactor.

It is found in the cytoplasm. The catalysed reaction is N(2)-acetyl-L-ornithine + H2O = L-ornithine + acetate. Its pathway is amino-acid biosynthesis; L-arginine biosynthesis; L-ornithine from N(2)-acetyl-L-ornithine (linear): step 1/1. In terms of biological role, catalyzes the hydrolysis of the amide bond of N(2)-acetylated L-amino acids. Cleaves the acetyl group from N-acetyl-L-ornithine to form L-ornithine, an intermediate in L-arginine biosynthesis pathway, and a branchpoint in the synthesis of polyamines. This chain is Acetylornithine deacetylase, found in Buchnera aphidicola subsp. Acyrthosiphon pisum (strain Tuc7).